The chain runs to 178 residues: PEST proteolytic signal-containing nuclear protein (178 aa).

The segment covering 1-15 (MADGKAGEEKPEKPQ) has biased composition (basic and acidic residues). Positions 1-82 (MADGKAGEEK…FAIGSQTARK (82 aa)) are disordered. Alanine 2 carries the post-translational modification N-acetylalanine. Residues 37 to 47 (SSSNGGESSSR) show a composition bias toward low complexity. Position 53 is a phosphoserine (serine 53). Lysine 64 carries the post-translational modification N6-acetyllysine. Phosphoserine occurs at positions 77, 87, and 119. Positions 134 to 158 (NIGRDTPTSAGPNSFNKGKHGFSDN) are disordered. Threonine 139 is subject to Phosphothreonine. Polar residues predominate over residues 139–149 (TPTSAGPNSFN). Serine 147 is subject to Phosphoserine. Lysine 150 and lysine 152 each carry N6-acetyllysine.

Interacts with UHRF2/NIRF. In terms of processing, ubiquitinated; mediated by UHRF2 and leading to its subsequent proteasomal degradation. Post-translationally, N-terminally acetylated in a HYPK-dependent manner by the NatA acetyltransferase complex which is composed of NAA10 and NAA15.

The protein resides in the nucleus. Functionally, may be involved in cell cycle regulation. This is PEST proteolytic signal-containing nuclear protein (Pcnp) from Mus musculus (Mouse).